A 588-amino-acid polypeptide reads, in one-letter code: Aspartate--tRNA ligase (588 aa).

L-aspartate is bound at residue Glu171. The aspartate stretch occupies residues 195 to 198; that stretch reads QLFK. An L-aspartate-binding site is contributed by Arg217. Residues 217-219 and Gln226 each bind ATP; that span reads RDE. Residue His447 coordinates L-aspartate. Glu481 contacts ATP. Arg488 contacts L-aspartate. 533–536 is a binding site for ATP; the sequence is GLDR.

The protein belongs to the class-II aminoacyl-tRNA synthetase family. Type 1 subfamily. In terms of assembly, homodimer.

The protein localises to the cytoplasm. The catalysed reaction is tRNA(Asp) + L-aspartate + ATP = L-aspartyl-tRNA(Asp) + AMP + diphosphate. Functionally, catalyzes the attachment of L-aspartate to tRNA(Asp) in a two-step reaction: L-aspartate is first activated by ATP to form Asp-AMP and then transferred to the acceptor end of tRNA(Asp). In Aeromonas salmonicida (strain A449), this protein is Aspartate--tRNA ligase.